A 441-amino-acid polypeptide reads, in one-letter code: Signal recognition particle 54 kDa protein (441 aa).

Residues 103 to 110 (GVQGSGKT), 184 to 188 (DTAGR), and 244 to 247 (TKMD) contribute to the GTP site.

It belongs to the GTP-binding SRP family. SRP54 subfamily. As to quaternary structure, part of the signal recognition particle protein translocation system, which is composed of SRP and FtsY. Archaeal SRP consists of a 7S RNA molecule of 300 nucleotides and two protein subunits: SRP54 and SRP19.

The protein localises to the cytoplasm. The catalysed reaction is GTP + H2O = GDP + phosphate + H(+). Involved in targeting and insertion of nascent membrane proteins into the cytoplasmic membrane. Binds to the hydrophobic signal sequence of the ribosome-nascent chain (RNC) as it emerges from the ribosomes. The SRP-RNC complex is then targeted to the cytoplasmic membrane where it interacts with the SRP receptor FtsY. The polypeptide is Signal recognition particle 54 kDa protein (Aeropyrum pernix (strain ATCC 700893 / DSM 11879 / JCM 9820 / NBRC 100138 / K1)).